The primary structure comprises 165 residues: Large ribosomal subunit protein uL15 (165 aa).

The tract at residues 1–44 is disordered; sequence MSLNQLKAPRGANRAKKRVGRGQGSGLGKTAGRGGKGQKARSGN. The segment covering 21–37 has biased composition (gly residues); that stretch reads RGQGSGLGKTAGRGGKG.

It belongs to the universal ribosomal protein uL15 family. As to quaternary structure, part of the 50S ribosomal subunit.

Functionally, binds to the 23S rRNA. This is Large ribosomal subunit protein uL15 from Anaeromyxobacter dehalogenans (strain 2CP-1 / ATCC BAA-258).